The following is a 242-amino-acid chain: uncharacterized protein (242 aa).

Disordered stretches follow at residues 43–70 and 112–162; these read SRRS…TSKD and RMSR…VTPR. Polar residues predominate over residues 58 to 70; the sequence is QSVSGRKNSTSKD. Composition is skewed to low complexity over residues 122–139 and 147–162; these read ERAA…AGHA and ADGA…VTPR.

This is an uncharacterized protein from Homo sapiens (Human).